An 88-amino-acid chain; its full sequence is Arminin 1a (88 aa).

A signal peptide spans 1–18; the sequence is MKTVLAFLFLPFIAFTHA. Residues 19–57 constitute a propeptide that is removed on maturation; that stretch reads ESYEDVKEEIKNEAEKEIFEDLEEESDALDSSVREFNDA. The residue at position 85 (Val85) is a Valine amide.

It belongs to the arminin family. In terms of tissue distribution, expressed in entodermal epithelium along the body column.

Its subcellular location is the secreted. The protein resides in the target cell membrane. Functionally, antimicrobial peptide with a broad-spectrum antimicrobial activity. Shows very strong bactericidal activity against B.megaterium (MBC=0.1 uM), E.coli (MBC=0.2 uM), S.aureus (MBC=0.4 uM), methicillin-resistant S.aureus (MRSA) (MBC=0.4-0.8 uM), vancomycin-resistant enterococci (VRE) (E.faecalis (MBC=1.6 uM), and E.faecium (MBC=0.4-0.8 uM)), and extended-spectrum beta-lactamase (ESBL)-producing enterobacteriaceae strains (K.pneumoniae (MBC=0.4-0.8 uM), E.coli (MBC=0.2-0.4 uM)). Keeps its antibacterial activity under a wide range of salt concentrations that mimic physiological conditions of human blood, which is surprising, since Hydra is an obligate freshwater animal with nearly no salt tolerance. Does not affect red blood cells. In Hydra vulgaris (Hydra), this protein is Arminin 1a.